A 1131-amino-acid polypeptide reads, in one-letter code: Probable chloride channel protein UM03490-D (1131 aa).

The next 12 helical transmembrane spans lie at G137–T157, V206–P226, F305–L325, I341–I361, G380–F397, S414–L434, F485–I505, Y518–G538, M577–G597, G603–V623, V643–V663, and A680–S702. Disordered regions lie at residues D815–A835 and A858–G928. Residues G866–S877 are compositionally biased toward low complexity. The CBS domain maps to I944–E1000. Over residues R1061–R1078 the composition is skewed to low complexity. The tract at residues R1061–E1131 is disordered. Over residues S1104–N1113 the composition is skewed to polar residues.

This sequence belongs to the chloride channel (TC 2.A.49) family.

The protein resides in the membrane. Voltage-gated chloride channel. This is Probable chloride channel protein UM03490-D from Mycosarcoma maydis (Corn smut fungus).